The primary structure comprises 110 residues: MNETIQVKIITPSSIAFEKQSKMVTMPGEDGMFGVLPNHVPMIVNLTAGLVQVYINNMHNSENTYLISGGVTEITSNYINIVTEAAINVTNLSESEISTQCYELQKLSSH.

This sequence belongs to the ATPase epsilon chain family. In terms of assembly, F-type ATPases have 2 components, CF(1) - the catalytic core - and CF(0) - the membrane proton channel. CF(1) has five subunits: alpha(3), beta(3), gamma(1), delta(1), epsilon(1). CF(0) has three main subunits: a, b and c.

The protein resides in the cell inner membrane. Its function is as follows. Produces ATP from ADP in the presence of a proton gradient across the membrane. The polypeptide is ATP synthase epsilon chain (Rickettsia typhi (strain ATCC VR-144 / Wilmington)).